Consider the following 218-residue polypeptide: Glutathione S-transferase U22 (218 aa).

At alanine 2 the chain carries N-acetylalanine. In terms of domain architecture, GST N-terminal spans 3-82; that stretch reads DEVILLDFWP…YIDEVWSDKN (80 aa). Glutathione is bound by residues 13–14, 39–40, 53–54, and 66–67; these read SP, DK, KI, and ES. The region spanning 88 to 208 is the GST C-terminal domain; it reads DPYQRAQARF…LHDSEKILAF (121 aa). Threonine 149 bears the Phosphothreonine mark.

It belongs to the GST superfamily. Tau family.

It is found in the cytoplasm. It localises to the cytosol. The catalysed reaction is RX + glutathione = an S-substituted glutathione + a halide anion + H(+). May be involved in the conjugation of reduced glutathione to a wide number of exogenous and endogenous hydrophobic electrophiles and have a detoxification role against certain herbicides. This chain is Glutathione S-transferase U22 (GSTU22), found in Arabidopsis thaliana (Mouse-ear cress).